We begin with the raw amino-acid sequence, 430 residues long: Nitroalkane oxidase (430 aa).

Residues 132 to 135 (LVFS), 140 to 142 (VAN), 170 to 172 (WAT), Arg301, Gln311, 372 to 376 (NAVGI), and 397 to 401 (IFDGG) contribute to the FAD site. Asp399 acts as the Proton acceptor in catalysis.

It belongs to the acyl-CoA dehydrogenase family. As to quaternary structure, homotetramer. Requires FAD as cofactor.

It catalyses the reaction a primary nitroalkane + O2 + H2O = an aldehyde + nitrite + H2O2 + H(+). It carries out the reaction a secondary nitroalkane + O2 + H2O = a ketone + nitrite + H2O2 + H(+). Functionally, nitroalkane oxidase (NAO) catalyzes the oxidation of nitroalkanes to the corresponding aldehydes or ketones with the release of nitrite and the consumption of molecular oxygen to yield hydrogen peroxide. NAO is unusual, since it catalyzes substrate oxidation by removing a substrate proton to form a carbanion intermediate. Prefers longer nitroalkanes, with 1-nitrohexane having the highest activity. The sequence is that of Nitroalkane oxidase from Podospora anserina (strain S / ATCC MYA-4624 / DSM 980 / FGSC 10383) (Pleurage anserina).